The chain runs to 215 residues: N-(5'-phosphoribosyl)anthranilate isomerase (215 aa).

The protein belongs to the TrpF family.

It carries out the reaction N-(5-phospho-beta-D-ribosyl)anthranilate = 1-(2-carboxyphenylamino)-1-deoxy-D-ribulose 5-phosphate. The protein operates within amino-acid biosynthesis; L-tryptophan biosynthesis; L-tryptophan from chorismate: step 3/5. The sequence is that of N-(5'-phosphoribosyl)anthranilate isomerase from Paracoccus denitrificans (strain Pd 1222).